A 350-amino-acid chain; its full sequence is Integrin beta-1-binding protein 2 (350 aa).

Zn(2+) is bound by residues Cys-5, Cys-10, Cys-24, and His-27. The 60-residue stretch at 5–64 (CYNKGCGQHFDPNTNLPDSCRYHPGVPIFHDALKGWSCCRKRTVDFSEFLNIKGCTVGLH) folds into the CHORD 1 domain. The SH3-binding signature appears at 28–31 (PGVP). Positions 42, 43, 59, and 64 each coordinate Zn(2+). The short motif at 70 to 79 (PEVPPQPEGP) is the SH3-binding element. Residues 72 to 92 (VPPQPEGPATSSLQEQKPLNT) form a disordered region. Over residues 80–92 (ATSSLQEQKPLNT) the composition is skewed to polar residues. 2 residues coordinate Zn(2+): Cys-150 and Cys-155. The CHORD 2 domain maps to 150-209 (CQNPGCDAVYQGPESDATPCTYHPGAPRFHEGMKSWSCCGIQTLDFGAFLAQPGCRVGRH). The SH2-binding motif lies at 159–162 (YQGP). Residues Cys-169 and His-172 each contribute to the Zn(2+) site. Residues 173-176 (PGAP) carry the SH3-binding motif. Cys-187, Cys-188, Cys-204, and His-209 together coordinate Zn(2+). A CS domain is found at 216–305 (PASCRHDWHQ…ADPGSWAQLE (90 aa)). An SH2-binding motif is present at residues 235–238 (YGQI). The interval 317–350 (GVLLEMDEEESEDSDDDLSWTEEEDEEEEEAMGE) is disordered. Residues 321-350 (EMDEEESEDSDDDLSWTEEEDEEEEEAMGE) show a composition bias toward acidic residues.

In terms of assembly, interacts with beta-1 integrin subunit. This interaction is regulated by divalent cations, and it occurs only in absence of calcium. Expressed in skeletal and cardiac muscles but not in other tissues. Is localized in rows flanking the Z line containing alpha-actinin.

May play a role during maturation and/or organization of muscles cells. The chain is Integrin beta-1-binding protein 2 (Itgb1bp2) from Mus musculus (Mouse).